Here is an 855-residue protein sequence, read N- to C-terminus: DNA mismatch repair protein MutS (855 aa).

616–623 (GPNMGGKS) contributes to the ATP binding site.

The protein belongs to the DNA mismatch repair MutS family.

In terms of biological role, this protein is involved in the repair of mismatches in DNA. It is possible that it carries out the mismatch recognition step. This protein has a weak ATPase activity. The protein is DNA mismatch repair protein MutS of Salmonella newport (strain SL254).